We begin with the raw amino-acid sequence, 506 residues long: Aldehyde dehydrogenase [NAD(P)+] 2 (506 aa).

Glu-268 functions as the Proton acceptor in the catalytic mechanism. Cys-302 serves as the catalytic Nucleophile.

Belongs to the aldehyde dehydrogenase family.

Its subcellular location is the cytoplasm. It carries out the reaction an aldehyde + NAD(+) + H2O = a carboxylate + NADH + 2 H(+). The catalysed reaction is 3-aminopropanal + NAD(+) + H2O = beta-alanine + NADH + 2 H(+). Functionally, cytoplasmic aldehyde dehydrogenase involved in ethanol oxidation. Involved in pantothenic acid production through the conversion of 3-aminopropanal to beta-alanine, an intermediate in pantothenic acid (vitamin B5) and coenzyme A (CoA) biosynthesis. The protein is Aldehyde dehydrogenase [NAD(P)+] 2 (ALD3) of Saccharomyces cerevisiae (strain ATCC 204508 / S288c) (Baker's yeast).